The sequence spans 414 residues: Glucose-1-phosphate adenylyltransferase (414 aa).

Residues Gly-164, Glu-181–Lys-182, and Ser-199 each bind alpha-D-glucose 1-phosphate.

Belongs to the bacterial/plant glucose-1-phosphate adenylyltransferase family. Homotetramer.

The enzyme catalyses alpha-D-glucose 1-phosphate + ATP + H(+) = ADP-alpha-D-glucose + diphosphate. The protein operates within glycan biosynthesis; glycogen biosynthesis. In terms of biological role, involved in the biosynthesis of ADP-glucose, a building block required for the elongation reactions to produce glycogen. Catalyzes the reaction between ATP and alpha-D-glucose 1-phosphate (G1P) to produce pyrophosphate and ADP-Glc. This chain is Glucose-1-phosphate adenylyltransferase, found in Kocuria rhizophila (strain ATCC 9341 / DSM 348 / NBRC 103217 / DC2201).